Reading from the N-terminus, the 62-residue chain is Large ribosomal subunit protein bL28 (62 aa).

This sequence belongs to the bacterial ribosomal protein bL28 family.

The chain is Large ribosomal subunit protein bL28 from Moorella thermoacetica (strain ATCC 39073 / JCM 9320).